A 964-amino-acid polypeptide reads, in one-letter code: SKI family transcriptional corepressor 1 (964 aa).

Disordered regions lie at residues 45 to 72, 278 to 365, 414 to 461, 525 to 587, 610 to 768, and 794 to 842; these read TQLGPGREGSSSPNSKQELQPYSGSSAL, RTFS…GGSA, AGEP…WGHQ, AGGG…RKSS, REAY…GAAK, and LCTP…EDGL. A compositionally biased stretch (gly residues) spans 283-310; it reads QGGGGGGANSGSGGAGKGGAGGGGGPGC. The span at 345–355 shows a compositional bias: low complexity; it reads ALGLAAAASGP. 2 stretches are compositionally biased toward gly residues: residues 356–365 and 417–440; these read AGPGGPGGSA and PKGGPGTGSSGGAGTAAGAGGPGA. Over residues 571 to 583 the composition is skewed to pro residues; the sequence is SLGPLPPPPPPPA. Residues 652-661 show a composition bias toward acidic residues; sequence DTADEPEVDV. Over residues 798–808 the composition is skewed to basic and acidic residues; sequence ETHEPDKEDNH. Polar residues predominate over residues 823 to 834; it reads DQRSVSQPSPAN. Positions 853-921 form a coiled coil; the sequence is EKDIENLARE…DTLCNELDQE (69 aa).

This sequence belongs to the SKI family. As to quaternary structure, interacts with SMAD1, SMAD2 and SMAD3. Interacts with LBX1. In terms of tissue distribution, expressed in brain with higher levels in embryo than adult. Expressed by migratory precursors of Purkinje cells in the postnatal brain. Also expressed in adult testis.

It localises to the nucleus. In terms of biological role, inhibits BMP signaling. Acts as a transcriptional corepressor of LBX1. This chain is SKI family transcriptional corepressor 1 (Skor1), found in Mus musculus (Mouse).